The sequence spans 228 residues: Cytochrome b5 domain-containing protein 1 (228 aa).

The 67-residue stretch at 17–83 folds into the Cytochrome b5 heme-binding domain; the sequence is RRYFTPSEVA…DPQTRDIRKH (67 aa). Histidine 83 provides a ligand contact to heme.

Belongs to the cytochrome b5 family.

The protein localises to the cytoplasm. The protein resides in the cytoskeleton. It is found in the cilium axoneme. Its function is as follows. Radial spoke stalk protein that binds heme under oxidizing conditions. Required for the coordinated beating of multiple cilia maybe by functioning in a redox signaling pathway. The protein is Cytochrome b5 domain-containing protein 1 (Cyb5d1) of Mus musculus (Mouse).